A 343-amino-acid polypeptide reads, in one-letter code: NADP-dependent alkenal double bond reductase P2 (343 aa).

Residues tyrosine 52 and tyrosine 79 each contribute to the substrate site. NADP(+) contacts are provided by residues 164–167, lysine 190, tyrosine 206, asparagine 230, 252–258, 282–284, and asparagine 332; these read GAVG, CGMISQY, and FVV.

It belongs to the NADP-dependent oxidoreductase L4BD family. In terms of assembly, homodimer.

It carries out the reaction an n-alkanal + NAD(+) = an alk-2-enal + NADH + H(+). The catalysed reaction is an n-alkanal + NADP(+) = an alk-2-enal + NADPH + H(+). Its function is as follows. Catalyzes the reduction of the 7-8 double bond of phenylpropanal substrates, such as p-coumaryl aldehyde and coniferyl aldehyde (in vitro). Has activity towards toxic substrates, such as 4-hydroxy-(2E)-nonenal (in vitro). May play a distinct role in plant antioxidant defense and is possibly involved in NAD(P)/NAD(P)h homeostasis. In Arabidopsis thaliana (Mouse-ear cress), this protein is NADP-dependent alkenal double bond reductase P2 (P2).